The primary structure comprises 309 residues: Sulfate adenylyltransferase subunit 2 (309 aa).

Belongs to the PAPS reductase family. CysD subfamily. In terms of assembly, heterodimer composed of CysD, the smaller subunit, and CysN.

It catalyses the reaction sulfate + ATP + H(+) = adenosine 5'-phosphosulfate + diphosphate. The protein operates within sulfur metabolism; hydrogen sulfide biosynthesis; sulfite from sulfate: step 1/3. In terms of biological role, with CysN forms the ATP sulfurylase (ATPS) that catalyzes the adenylation of sulfate producing adenosine 5'-phosphosulfate (APS) and diphosphate, the first enzymatic step in sulfur assimilation pathway. APS synthesis involves the formation of a high-energy phosphoric-sulfuric acid anhydride bond driven by GTP hydrolysis by CysN coupled to ATP hydrolysis by CysD. The polypeptide is Sulfate adenylyltransferase subunit 2 (Mycobacterium sp. (strain JLS)).